A 475-amino-acid chain; its full sequence is E3 ubiquitin-protein ligase TRIM62 (475 aa).

The segment at 11–54 adopts an RING-type zinc-finger fold; the sequence is CSICLSIYQDPVSLGCEHYFCRRCITEHWVRQEAQGARDCPECR. A B box-type zinc finger spans residues 88–128; sequence RAARPCQAHDKVKLFCLTDRALLCFFCDEPALHEQHQVTGI. Zn(2+)-binding residues include cysteine 93, histidine 96, cysteine 114, and histidine 120. Residues 121 to 241 are a coiled coil; the sequence is EQHQVTGIDD…LQERLAETDR (121 aa). In terms of domain architecture, B30.2/SPRY spans 277–475; sequence PLQYTIWKSL…QPLRINTVRI (199 aa).

It belongs to the TRIM/RBCC family. In terms of assembly, interacts with the ubiquitin-conjugating enzyme, UBE2D2. Post-translationally, polyubiquitinated, autoubiquitinated in the presence of UBE2D2.

The protein localises to the cytoplasm. The catalysed reaction is S-ubiquitinyl-[E2 ubiquitin-conjugating enzyme]-L-cysteine + [acceptor protein]-L-lysine = [E2 ubiquitin-conjugating enzyme]-L-cysteine + N(6)-ubiquitinyl-[acceptor protein]-L-lysine.. Its pathway is protein modification; protein ubiquitination. Its function is as follows. E3 ubiquitin ligase that plays a role in antifungal immunity by mediating 'Lys-27'-linked ubiquitination of CARD9 downstream of C-type lectin receptors; leading to CARD9 activation, followed by activation of NF-kappa-B and MAP kinase p38 pathways. E3 ubiquitin ligase activity is dependent on E2 ubiquitin-conjugating enzyme UBE2D2. This chain is E3 ubiquitin-protein ligase TRIM62, found in Mus musculus (Mouse).